A 422-amino-acid polypeptide reads, in one-letter code: Zinc finger and BTB domain-containing protein 42 (422 aa).

Residues 24-92 enclose the BTB domain; sequence CDCTVLVGDA…MYEGRLDLRS (69 aa). Disordered stretches follow at residues 121 to 141, 166 to 188, and 207 to 256; these read KDRS…QPPC, AALP…DQAL, and LQTP…AAKG. Residues 243-252 show a composition bias toward pro residues; sequence HSPPKPPPVP. 4 C2H2-type zinc fingers span residues 294-316, 334-356, 362-384, and 390-413; these read CICP…LSAH, PTCP…ERTH, YTCV…TVVH, and HACR…RKFH.

This sequence belongs to the krueppel C2H2-type zinc-finger protein family. ZBTB18 subfamily. As to expression, expressed in skeletal muscle (at protein level).

It localises to the cytoplasm. The protein resides in the nucleus. The protein localises to the nucleoplasm. Its function is as follows. Transcriptional repressor. Specifically binds DNA and probably acts by recruiting chromatin remodeling multiprotein complexes. The protein is Zinc finger and BTB domain-containing protein 42 (ZBTB42) of Homo sapiens (Human).